Consider the following 119-residue polypeptide: NADH-quinone oxidoreductase subunit A (119 aa).

Transmembrane regions (helical) follow at residues 7–27 (YPVL…VSIG), 63–83 (LVAI…PWGV), and 88–108 (IGWP…LGFA).

It belongs to the complex I subunit 3 family. In terms of assembly, NDH-1 is composed of 14 different subunits. Subunits NuoA, H, J, K, L, M, N constitute the membrane sector of the complex.

The protein resides in the cell inner membrane. It catalyses the reaction a quinone + NADH + 5 H(+)(in) = a quinol + NAD(+) + 4 H(+)(out). Its function is as follows. NDH-1 shuttles electrons from NADH, via FMN and iron-sulfur (Fe-S) centers, to quinones in the respiratory chain. The immediate electron acceptor for the enzyme in this species is believed to be ubiquinone. Couples the redox reaction to proton translocation (for every two electrons transferred, four hydrogen ions are translocated across the cytoplasmic membrane), and thus conserves the redox energy in a proton gradient. The chain is NADH-quinone oxidoreductase subunit A from Burkholderia ambifaria (strain MC40-6).